Here is a 238-residue protein sequence, read N- to C-terminus: uncharacterized protein (238 aa).

This sequence to M.thermoautotrophicum MTH564.

This is an uncharacterized protein from Methanocaldococcus jannaschii (strain ATCC 43067 / DSM 2661 / JAL-1 / JCM 10045 / NBRC 100440) (Methanococcus jannaschii).